Consider the following 409-residue polypeptide: N-acetylglucosamine-6-phosphate deacetylase (409 aa).

E143 serves as a coordination point for a divalent metal cation. 154–155 contributes to the substrate binding site; the sequence is AH. Residues H211 and H232 each contribute to the a divalent metal cation site. Residues 235–236, R243, and 269–272 contribute to the substrate site; these read NA and DGIH. D294 (proton donor/acceptor) is an active-site residue. 328 to 330 contacts substrate; it reads LSG.

This sequence belongs to the metallo-dependent hydrolases superfamily. NagA family. A divalent metal cation is required as a cofactor.

The catalysed reaction is N-acetyl-D-glucosamine 6-phosphate + H2O = D-glucosamine 6-phosphate + acetate. It functions in the pathway amino-sugar metabolism; N-acetylneuraminate degradation. Its function is as follows. Hydrolyzes the N-glycolyl group from N-glycolylglucosamine 6-phosphate (GlcNGc-6-P) in the N-glycolylneuraminic acid (Neu5Gc) degradation pathway. This chain is N-acetylglucosamine-6-phosphate deacetylase (AMDHD2), found in Bos taurus (Bovine).